The sequence spans 322 residues: Heterogeneous nuclear ribonucleoprotein D-like (322 aa).

A disordered region spans residues 1 to 36 (MTGTARSALPLPQSPARALRPSGAARAAPSLSPSRF). Arg-6 carries the omega-N-methylarginine modification. A compositionally biased stretch (low complexity) spans 14 to 36 (SPARALRPSGAARAAPSLSPSRF). RRM domains follow at residues 51–133 (NKMF…KGKE) and 136–215 (KKVF…QPKE). Lys-64 is subject to N6-methyllysine. Lys-112 participates in a covalent cross-link: Glycyl lysine isopeptide (Lys-Gly) (interchain with G-Cter in SUMO2). Lys-119 is modified (N6-acetyllysine). Residue Ser-144 is modified to Phosphoserine. Disordered regions lie at residues 216 to 251 (VYRQ…NWNQ) and 299 to 322 (SGQQ…YQPY). The span at 226-245 (GGRGAAAGGRGGARGRGRGQ) shows a compositional bias: gly residues. The segment at 245-322 (QGQNWNQGFN…GNHQNNYQPY (78 aa)) is necessary for interaction with TNPO1. Dimethylated arginine; alternate is present on Arg-310. An Omega-N-methylarginine; alternate modification is found at Arg-310.

In terms of assembly, interacts with TNPO1 and ZNF148. In terms of processing, dimethylation of Arg-310 is probably of the asymmetric type.

The protein localises to the nucleus. It localises to the cytoplasm. Acts as a transcriptional regulator. Promotes transcription repression. Promotes transcription activation in differentiated myotubes. Binds to double- and single-stranded DNA sequences. Binds to the transcription suppressor CATR sequence of the COX5B promoter. Binds with high affinity to RNA molecules that contain AU-rich elements (AREs) found within the 3'-UTR of many proto-oncogenes and cytokine mRNAs. Binds both to nuclear and cytoplasmic poly(A) mRNAs. Binds to poly(G) and poly(A), but not to poly(U) or poly(C) RNA homopolymers. Binds to the 5'-ACUAGC-3' RNA consensus sequence. In Rattus norvegicus (Rat), this protein is Heterogeneous nuclear ribonucleoprotein D-like (Hnrnpdl).